The sequence spans 338 residues: UDP-3-O-acylglucosamine N-acyltransferase (338 aa).

The Proton acceptor role is filled by His251.

Belongs to the transferase hexapeptide repeat family. LpxD subfamily. Homotrimer.

The enzyme catalyses a UDP-3-O-[(3R)-3-hydroxyacyl]-alpha-D-glucosamine + a (3R)-hydroxyacyl-[ACP] = a UDP-2-N,3-O-bis[(3R)-3-hydroxyacyl]-alpha-D-glucosamine + holo-[ACP] + H(+). It participates in bacterial outer membrane biogenesis; LPS lipid A biosynthesis. Functionally, catalyzes the N-acylation of UDP-3-O-acylglucosamine using 3-hydroxyacyl-ACP as the acyl donor. Is involved in the biosynthesis of lipid A, a phosphorylated glycolipid that anchors the lipopolysaccharide to the outer membrane of the cell. The sequence is that of UDP-3-O-acylglucosamine N-acyltransferase from Psychrobacter cryohalolentis (strain ATCC BAA-1226 / DSM 17306 / VKM B-2378 / K5).